A 724-amino-acid chain; its full sequence is Probable methyltransferase PMT28 (724 aa).

At 1–22 (MMERKREMGIAYFARRIKQPRG) the chain is on the cytoplasmic side. The chain crosses the membrane as a helical; Signal-anchor for type II membrane protein span at residues 23–43 (IWVKMTFIVVLGLCFVFFWSF). At 44 to 724 (LSSSASTFNV…LCAQKTLWRP (681 aa)) the chain is on the lumenal side. A disordered region spans residues 63 to 211 (EPVSSRTKSA…ISKKRKRKGP (149 aa)). Residues 71 to 98 (SAHEVSESSKLHERGKVESGSKSKEGKK) show a composition bias toward basic and acidic residues. Over residues 107–125 (HETKKKKEHAVSHPHKKKD) the composition is skewed to basic residues. Over residues 126–140 (VPKPVVEEVVVKEDQ) the composition is skewed to basic and acidic residues. The segment covering 141 to 173 (EHEEAESDDSDQSNKEDGEEGTESDGNEGESDG) has biased composition (acidic residues). N-linked (GlcNAc...) asparagine glycans are attached at residues Asn305, Asn316, and Asn568.

The protein belongs to the methyltransferase superfamily.

Its subcellular location is the golgi apparatus membrane. This Arabidopsis thaliana (Mouse-ear cress) protein is Probable methyltransferase PMT28.